The primary structure comprises 133 residues: Small ribosomal subunit protein uS11 (133 aa).

Belongs to the universal ribosomal protein uS11 family. As to quaternary structure, part of the 30S ribosomal subunit. Interacts with proteins S7 and S18. Binds to IF-3.

Its function is as follows. Located on the platform of the 30S subunit, it bridges several disparate RNA helices of the 16S rRNA. Forms part of the Shine-Dalgarno cleft in the 70S ribosome. The protein is Small ribosomal subunit protein uS11 of Ralstonia pickettii (strain 12J).